The sequence spans 1025 residues: Multidrug resistance protein MdtC (1025 aa).

12 consecutive transmembrane segments (helical) span residues 3 to 23 (FFALFIYRPVATILLSVAITL), 333 to 353 (EVEQTLIISVALVILVVFLFL), 360 to 380 (IIPAVVVPVSLIGTFAAMYLC), 387 to 407 (LSLMALTIATGFVVDDAIVVL), 431 to 451 (VGFTVLSMSLSLVAVFLPLLL), 463 to 483 (FAVTLSVAIGISLLVSLTLTP), 528 to 548 (LVGVVLLGTIALNIWLYISIP), 853 to 873 (VILIIAAIATVYIVLGILYES), 875 to 895 (VHPLTILSTLPSAGVGALLAL), 897 to 917 (LFNAPFSLIALIGIMLLIGIV), 953 to 973 (PIMMTTLAALFGALPLVLSGG), and 984 to 1004 (ITIVGGLVMSQLLTLYTTPVV).

The protein belongs to the resistance-nodulation-cell division (RND) (TC 2.A.6) family. MdtC subfamily. Part of a tripartite efflux system composed of MdtA, MdtB and MdtC. MdtC forms a heteromultimer with MdtB.

It localises to the cell inner membrane. In terms of biological role, the MdtABC tripartite complex confers resistance against novobiocin and deoxycholate. This chain is Multidrug resistance protein MdtC, found in Escherichia coli O8 (strain IAI1).